The primary structure comprises 113 residues: Large ribosomal subunit protein eL31A (113 aa).

Belongs to the eukaryotic ribosomal protein eL31 family. Component of the large ribosomal subunit (LSU). Mature yeast ribosomes consist of a small (40S) and a large (60S) subunit. The 40S small subunit contains 1 molecule of ribosomal RNA (18S rRNA) and 33 different proteins (encoded by 57 genes). The large 60S subunit contains 3 rRNA molecules (25S, 5.8S and 5S rRNA) and 46 different proteins (encoded by 81 genes).

It localises to the cytoplasm. Its function is as follows. Component of the ribosome, a large ribonucleoprotein complex responsible for the synthesis of proteins in the cell. The small ribosomal subunit (SSU) binds messenger RNAs (mRNAs) and translates the encoded message by selecting cognate aminoacyl-transfer RNA (tRNA) molecules. The large subunit (LSU) contains the ribosomal catalytic site termed the peptidyl transferase center (PTC), which catalyzes the formation of peptide bonds, thereby polymerizing the amino acids delivered by tRNAs into a polypeptide chain. The nascent polypeptides leave the ribosome through a tunnel in the LSU and interact with protein factors that function in enzymatic processing, targeting, and the membrane insertion of nascent chains at the exit of the ribosomal tunnel. This Saccharomyces cerevisiae (strain ATCC 204508 / S288c) (Baker's yeast) protein is Large ribosomal subunit protein eL31A.